The following is a 471-amino-acid chain: Argininosuccinate lyase (471 aa).

This sequence belongs to the lyase 1 family. Argininosuccinate lyase subfamily.

Its subcellular location is the cytoplasm. The catalysed reaction is 2-(N(omega)-L-arginino)succinate = fumarate + L-arginine. It functions in the pathway amino-acid biosynthesis; L-arginine biosynthesis; L-arginine from L-ornithine and carbamoyl phosphate: step 3/3. In Cereibacter sphaeroides (strain ATCC 17023 / DSM 158 / JCM 6121 / CCUG 31486 / LMG 2827 / NBRC 12203 / NCIMB 8253 / ATH 2.4.1.) (Rhodobacter sphaeroides), this protein is Argininosuccinate lyase.